Reading from the N-terminus, the 2245-residue chain is Basic helix-loop-helix domain-containing protein USF3 (2245 aa).

The disordered stretch occupies residues 1 to 28 (MPEMTENETPTKKQHRKKNRETHNAVER). One can recognise a bHLH domain in the interval 18-69 (KNRETHNAVERHRKKKINAGINRIGELIPCSPALKQSKNMILDQAFKYITEL). Positions 77–112 (LLNGGNNEQAEEIKKLRKQLEEIQKENGRYIELLKA) form a coiled coil. 13 disordered regions span residues 271–290 (LHTC…QENP), 447–470 (SQTP…TSNH), 881–900 (SKSK…VTSE), 906–933 (AAKS…ALSD), 1015–1041 (KNPQ…IVDS), 1164–1238 (PSEA…SITS), 1307–1331 (IPNS…AKRA), 1460–1624 (IKQQ…VSGH), 1636–1664 (LEQQ…ERNR), 1736–1764 (TFKP…GNPV), 1777–1815 (ISQN…ENTC), 1834–1859 (GSQR…YNCP), and 1891–2031 (STLN…QPAT). Over residues 273–288 (TCLNDQNSSENKNGQE) the composition is skewed to polar residues. Positions 881–896 (SKSKSAEKSSPPSQES) are enriched in low complexity. A compositionally biased stretch (polar residues) spans 912–925 (STPNLQQETSQDKP). Composition is skewed to polar residues over residues 1185-1202 (GTGQ…QGSI) and 1219-1238 (IKTS…SITS). Residues 1319 to 1331 (PSHESRKDSAKRA) show a composition bias toward basic and acidic residues. Over residues 1462-1478 (QQQQQQQQQQQQQQQQQ) the composition is skewed to low complexity. 2 stretches are compositionally biased toward polar residues: residues 1501-1520 (SVHS…QEVQ) and 1528-1538 (VQGTQTSQLSL). Residues 1560-1569 (QQMQQQMQQH) are compositionally biased toward low complexity. Polar residues predominate over residues 1570-1585 (FGSSQTEKSCENPSTS). The span at 1593–1624 (QNHLNQDIMHQQQDVGSRQQGSGVSSEHVSGH) shows a compositional bias: low complexity. A compositionally biased stretch (polar residues) spans 1636-1654 (LEQQMVSQPSIVTRSSDMT). Composition is skewed to polar residues over residues 1904-1923 (GDIQ…SNPM) and 1998-2007 (SGNQRQSTVF).

It is found in the nucleus. Its function is as follows. Involved in the negative regulation of epithelial-mesenchymal transition, the process by which epithelial cells lose their polarity and adhesion properties to become mesenchymal cells with enhanced migration and invasive properties. The chain is Basic helix-loop-helix domain-containing protein USF3 from Homo sapiens (Human).